The primary structure comprises 235 residues: uncharacterized protein (235 aa).

The first 24 residues, 1–24 (MSDRMKLKGLLAFCLLFLSSFVLA), serve as a signal peptide directing secretion.

This is an uncharacterized protein from Haemophilus influenzae (strain ATCC 51907 / DSM 11121 / KW20 / Rd).